The following is a 461-amino-acid chain: tRNA modification GTPase MnmE (461 aa).

(6S)-5-formyl-5,6,7,8-tetrahydrofolate is bound by residues Arg-23, Glu-84, and Arg-123. The TrmE-type G domain occupies 216–383; that stretch reads GARAALIGRP…LGATVARLLL (168 aa). K(+) is bound at residue Asn-226. GTP-binding positions include 226 to 231, 245 to 251, and 270 to 273; these read NAGKSS, TPIPGTT, and DTAG. Residue Ser-230 participates in Mg(2+) binding. K(+)-binding residues include Thr-245, Ile-247, and Thr-250. Thr-251 contributes to the Mg(2+) binding site. (6S)-5-formyl-5,6,7,8-tetrahydrofolate is bound at residue Lys-461.

This sequence belongs to the TRAFAC class TrmE-Era-EngA-EngB-Septin-like GTPase superfamily. TrmE GTPase family. Homodimer. Heterotetramer of two MnmE and two MnmG subunits. The cofactor is K(+).

It is found in the cytoplasm. Exhibits a very high intrinsic GTPase hydrolysis rate. Involved in the addition of a carboxymethylaminomethyl (cmnm) group at the wobble position (U34) of certain tRNAs, forming tRNA-cmnm(5)s(2)U34. The chain is tRNA modification GTPase MnmE from Roseiflexus sp. (strain RS-1).